A 173-amino-acid polypeptide reads, in one-letter code: PTS system glucose-specific EIIA component (173 aa).

The PTS EIIA type-1 domain maps to 40 to 144 (DPTFAQKMMG…STVTPVVVTN (105 aa)). The Zn(2+) site is built by H77 and H92. H92 (tele-phosphohistidine intermediate; for EIIA activity) is an active-site residue. H92 is subject to Phosphohistidine; by HPr.

In terms of assembly, heterodimer with glycerol kinase (glpk). The cofactor is Zn(2+).

It localises to the cytoplasm. The phosphoenolpyruvate-dependent sugar phosphotransferase system (sugar PTS), a major carbohydrate active transport system, catalyzes the phosphorylation of incoming sugar substrates concomitantly with their translocation across the cell membrane. The enzyme II complex composed of PtsG and Crr is involved in glucose transport. The sequence is that of PTS system glucose-specific EIIA component (crr) from Halalkalibacterium halodurans (strain ATCC BAA-125 / DSM 18197 / FERM 7344 / JCM 9153 / C-125) (Bacillus halodurans).